Here is a 240-residue protein sequence, read N- to C-terminus: MGRKFEVRKLSMAKTAGAKIKVYSKYGKEIYVCAKNGSLDPDSNLSLKRLIEKAKKDQVPSHVIEKAIDKAKGGAGEEFATARYEWFGPRYCMVIVDCLTDNNNRTFMDVRQAFVKNHAKIGGPGTVGHMFEHQAVFQFAGDDEDMVLENLMMEDVDVSDIECEDGIITVYAPHTEFFKVKNALAATMPDVAFDVEEISFVPQTMTEISGDDVAAFEKFLDVLNDCDDVQNIYHNAEIAE.

It belongs to the TACO1 family.

The protein localises to the cytoplasm. In Photobacterium profundum (strain SS9), this protein is Probable transcriptional regulatory protein PBPRB1582.